We begin with the raw amino-acid sequence, 261 residues long: Imidazole glycerol phosphate synthase subunit HisF (261 aa).

Residues aspartate 12 and aspartate 131 contribute to the active site.

The protein belongs to the HisA/HisF family. Heterodimer of HisH and HisF.

It localises to the cytoplasm. The enzyme catalyses 5-[(5-phospho-1-deoxy-D-ribulos-1-ylimino)methylamino]-1-(5-phospho-beta-D-ribosyl)imidazole-4-carboxamide + L-glutamine = D-erythro-1-(imidazol-4-yl)glycerol 3-phosphate + 5-amino-1-(5-phospho-beta-D-ribosyl)imidazole-4-carboxamide + L-glutamate + H(+). It functions in the pathway amino-acid biosynthesis; L-histidine biosynthesis; L-histidine from 5-phospho-alpha-D-ribose 1-diphosphate: step 5/9. In terms of biological role, IGPS catalyzes the conversion of PRFAR and glutamine to IGP, AICAR and glutamate. The HisF subunit catalyzes the cyclization activity that produces IGP and AICAR from PRFAR using the ammonia provided by the HisH subunit. This chain is Imidazole glycerol phosphate synthase subunit HisF, found in Brucella abortus (strain S19).